Here is a 718-residue protein sequence, read N- to C-terminus: MSSSLLTGGHVVSLTPHEESRMALHPTPSHDLPALCPYYTTESWGTQPLMDPTLCKGSSNRLQQAQQAEARAQCLLQCPGEQASGASQDLDSCIDFSLEALNKMILELDPTFQLLPSGIAGPQAEPTNSVASRTKKEEPDALDIKYIEVTSTRSRCLDSPQRCSSPCVTPPFGSPRSGGLFLSRDIPRETRSSSNESLIFSGNQGRGSSPHTPSSLSNSIPCRESRASGSPLATPPGWEKGLRAPQWGSRVSTLSASPVSDISYVFGSNQSLPHSSLSSYPPSSRSLGSPASSSSSLHSLDRGSQCVRSSDAQVPSNPIVGMGQPQAVPSTPVAKEQASSCPPSVTNSMADIPIVLINGNPEPQSPPAQQTPRYQDSVQSRATSPSHLCQATKSHSKTLPDVPLTSPSHLCQATKSHSKTLPDVPLTASPESPAKDMQPTMKFVMDTSKYWFKPSITREQAINLLRTEKPGTFVIRDSSSYRGSFGLALKVQETPASAPNRPGEDSTDFIRHFLVESSAKGVHLKGADEEPYFGSLSAFVCQHSIMALALPCKLTIPQKELGGAEPASDSPTHGQTSCLKISAGCHTLYLTSVSVETLSGALAVQKAISVMLERDVLPTPTVVHFKVTEQGITLTDVQRKVFFRRHYPLIALRFCGMDPEQRKWQKYCKPSRIFGFVAKSQTEPQENACHLFAEYDAAQPASQVISLVTALLKDTERV.

The N-terminal stretch at 1-14 (MSSSLLTGGHVVSL) is a signal peptide. 2 disordered regions span residues 188–244 (RETR…GLRA) and 272–437 (LPHS…AKDM). A compositionally biased stretch (polar residues) spans 192-207 (SSSNESLIFSGNQGRG). Residues 208–219 (SSPHTPSSLSNS) show a composition bias toward low complexity. Serine 230 is modified (phosphoserine). Over residues 272 to 304 (LPHSSLSSYPPSSRSLGSPASSSSSLHSLDRGS) the composition is skewed to low complexity. 4 stretches are compositionally biased toward polar residues: residues 306–316 (CVRSSDAQVPS), 337–349 (QASS…TNSM), 367–393 (PAQQ…QATK), and 405–415 (TSPSHLCQATK). An SH2 domain is found at 451-558 (WFKPSITREQ…ALPCKLTIPQ (108 aa)). The region spanning 585–711 (CHTLYLTSVS…SQVISLVTAL (127 aa)) is the PTB domain.

This sequence belongs to the PTEN phosphatase protein family. In terms of assembly, interacts (via SH2 domain) with Rho GTPase-activating protein DLC1 (via C-terminus); the interaction is independent of DLC1 tyrosine phosphorylation. Interacts with integrin ITGB1; the interaction displaces tensin TNS3 from the ITGB1 cytoplasmic tail and promotes ITGB1 stability. Interacts (via SH2 domain) with E3 ubiquitin-protein ligase CBL (phosphorylated on 'Tyr-781'); the interaction is enhanced in the presence of EGF and reduces interaction of CBL with EGFR. Interacts (via SH2 domain) with receptor tyrosine kinase MET (when phosphorylated); the interaction increases MET protein stability.

Its subcellular location is the cell junction. The protein resides in the focal adhesion. The protein localises to the cytoplasm. It localises to the cytoskeleton. In terms of biological role, promotes EGF-induced cell migration by displacing tensin TNS3 from the cytoplasmic tail of integrin ITGB1 which results in dissociation of TNS3 from focal adhesions, disassembly of actin stress fibers and initiation of cell migration. Suppresses ligand-induced degradation of EGFR by reducing EGFR ubiquitination in the presence of EGF. Increases MET protein stability by inhibiting MET endocytosis and subsequent lysosomal degradation which leads to increased cell survival, proliferation and migration. The protein is Tensin-4 (Tns4) of Rattus norvegicus (Rat).